Here is a 459-residue protein sequence, read N- to C-terminus: Exodeoxyribonuclease 7 large subunit (459 aa).

Belongs to the XseA family. In terms of assembly, heterooligomer composed of large and small subunits.

The protein resides in the cytoplasm. It carries out the reaction Exonucleolytic cleavage in either 5'- to 3'- or 3'- to 5'-direction to yield nucleoside 5'-phosphates.. Its function is as follows. Bidirectionally degrades single-stranded DNA into large acid-insoluble oligonucleotides, which are then degraded further into small acid-soluble oligonucleotides. This Yersinia pseudotuberculosis serotype O:3 (strain YPIII) protein is Exodeoxyribonuclease 7 large subunit.